The primary structure comprises 171 residues: Nudix hydrolase DR_0079 (171 aa).

A Nudix hydrolase domain is found at 32 to 162; it reads ERVRVVNAFL…EAAKGDLAEL (131 aa). Positions 69-91 match the Nudix box motif; the sequence is GGAVQSGETYEEAFRREAREELN. Positions 85 and 89 each coordinate Mg(2+).

The protein belongs to the Nudix hydrolase family. Monomer. Mg(2+) is required as a cofactor.

Its activity is regulated as follows. Inhibited by zinc, calcium or copper ions. In terms of biological role, hydrolase that converts various nucleotide triphosphates (NTPs) to the corresponding nucleotide monophosphates and diphosphate, and nucleotide diphosphates to nucleotide monophosphates and inorganic phosphate. Has a marked preference for cytosine ribonucleoside 5'-diphosphate (CDP) and cytosine ribonucleoside 5'-triphosphate (CTP). Has lower activity towards the deoxyribose nucleotides dCDP and dCTP, and towards dGDP, TDP and UDP. The polypeptide is Nudix hydrolase DR_0079 (Deinococcus radiodurans (strain ATCC 13939 / DSM 20539 / JCM 16871 / CCUG 27074 / LMG 4051 / NBRC 15346 / NCIMB 9279 / VKM B-1422 / R1)).